An 86-amino-acid chain; its full sequence is DNA replication protein 1 (86 aa).

Positions 38-67 form a coiled coil; sequence LELEKKMTKLEHENKLMKNALYELSRMENN.

Belongs to the phi29likevirus DNA replication protein 1 family. In terms of assembly, homomultimer. Self-associates into large complexes forming long filamentous structures. Interacts (via N-terminus) with the primer terminal protein. Interacts with host FtsZ protein.

It localises to the host membrane. Protein that assembles into highly ordered structures and provides a specific site for viral DNA replication. Probably anchors the viral DNA replisome to the host membrane. The chain is DNA replication protein 1 (1) from Bacillus subtilis (Bacteriophage phi-29).